Consider the following 233-residue polypeptide: Coproporphyrinogen-III oxidase 2, chloroplastic (233 aa).

Residues 1–48 (MASHSSTLFTSPSSFILFSSHRLKSSPNYFTYHFPRSVKRPHFDLRCS) constitute a chloroplast transit peptide. Ser-174 is a binding site for substrate. His-188 acts as the Proton donor in catalysis.

The protein belongs to the aerobic coproporphyrinogen-III oxidase family. In terms of assembly, homodimer.

The protein resides in the plastid. The protein localises to the chloroplast. The enzyme catalyses coproporphyrinogen III + O2 + 2 H(+) = protoporphyrinogen IX + 2 CO2 + 2 H2O. It functions in the pathway porphyrin-containing compound metabolism; protoporphyrin-IX biosynthesis; protoporphyrinogen-IX from coproporphyrinogen-III (O2 route): step 1/1. It participates in porphyrin-containing compound metabolism; chlorophyll biosynthesis. In terms of biological role, key enzyme in heme biosynthesis. Catalyzes the oxidative decarboxylation of propionic acid side chains of rings A and B of coproporphyrinogen III. The polypeptide is Coproporphyrinogen-III oxidase 2, chloroplastic (CPX2) (Arabidopsis thaliana (Mouse-ear cress)).